Reading from the N-terminus, the 322-residue chain is Biotin synthase (322 aa).

Positions 39-266 (NQVQISSLLN…KSVVRLSAGR (228 aa)) constitute a Radical SAM core domain. 3 residues coordinate [4Fe-4S] cluster: Cys-54, Cys-58, and Cys-61. Residues Cys-98, Cys-129, Cys-189, and Arg-261 each contribute to the [2Fe-2S] cluster site.

It belongs to the radical SAM superfamily. Biotin synthase family. Homodimer. It depends on [4Fe-4S] cluster as a cofactor. Requires [2Fe-2S] cluster as cofactor.

The catalysed reaction is (4R,5S)-dethiobiotin + (sulfur carrier)-SH + 2 reduced [2Fe-2S]-[ferredoxin] + 2 S-adenosyl-L-methionine = (sulfur carrier)-H + biotin + 2 5'-deoxyadenosine + 2 L-methionine + 2 oxidized [2Fe-2S]-[ferredoxin]. Its pathway is cofactor biosynthesis; biotin biosynthesis; biotin from 7,8-diaminononanoate: step 2/2. In terms of biological role, catalyzes the conversion of dethiobiotin (DTB) to biotin by the insertion of a sulfur atom into dethiobiotin via a radical-based mechanism. The chain is Biotin synthase from Vesicomyosocius okutanii subsp. Calyptogena okutanii (strain HA).